Reading from the N-terminus, the 512-residue chain is ATP synthase subunit alpha (512 aa).

ATP is bound at residue 169-176; sequence GDRQTGKT.

This sequence belongs to the ATPase alpha/beta chains family. F-type ATPases have 2 components, CF(1) - the catalytic core - and CF(0) - the membrane proton channel. CF(1) has five subunits: alpha(3), beta(3), gamma(1), delta(1), epsilon(1). CF(0) has three main subunits: a(1), b(2) and c(9-12). The alpha and beta chains form an alternating ring which encloses part of the gamma chain. CF(1) is attached to CF(0) by a central stalk formed by the gamma and epsilon chains, while a peripheral stalk is formed by the delta and b chains.

The protein resides in the cell membrane. The catalysed reaction is ATP + H2O + 4 H(+)(in) = ADP + phosphate + 5 H(+)(out). In terms of biological role, produces ATP from ADP in the presence of a proton gradient across the membrane. The alpha chain is a regulatory subunit. This chain is ATP synthase subunit alpha, found in Elusimicrobium minutum (strain Pei191).